The following is a 361-amino-acid chain: Protein RecA (361 aa).

Residue 77–84 coordinates ATP; sequence GPESSGKT.

This sequence belongs to the RecA family.

The protein localises to the cytoplasm. Functionally, can catalyze the hydrolysis of ATP in the presence of single-stranded DNA, the ATP-dependent uptake of single-stranded DNA by duplex DNA, and the ATP-dependent hybridization of homologous single-stranded DNAs. It interacts with LexA causing its activation and leading to its autocatalytic cleavage. The protein is Protein RecA of Rhizobium etli.